The chain runs to 166 residues: SRAVADSWMDEVIKLCGRELVRAQIAICGKSTWSKRSLSQEDAPQTPRPVAEIVPSFINKDTETINMMSEFVANLPQELKLTLSEMQPALPQLQQYVPVLKDSSLLFEEFKKLIRNRQSEAADSSPSELKYLGLDTHSRKKRQLYSALANKCCHVGCTKRSLARFC.

A signal peptide spans 1–5 (SRAVA). 3 disulfides stabilise this stretch: cysteine 16-cysteine 153, cysteine 28-cysteine 166, and cysteine 152-cysteine 157. Residues 37–138 (SLSQEDAPQT…LKYLGLDTHS (102 aa)) constitute a propeptide, connecting peptide.

This sequence belongs to the insulin family. In terms of assembly, heterodimer of a B chain and an A chain linked by two disulfide bonds. In terms of tissue distribution, expressed in the corpus luteum of pregnancy and in the placenta.

The protein resides in the secreted. Relaxin is an ovarian hormone that acts with estrogen to produce dilatation of the birth canal in many mammals. May be involved in remodeling of connective tissues during pregnancy, promoting growth of pubic ligaments and ripening of the cervix. The protein is Prorelaxin H2 (RNL2) of Pan troglodytes (Chimpanzee).